The primary structure comprises 144 residues: Putative pre-16S rRNA nuclease (144 aa).

It belongs to the YqgF nuclease family.

The protein resides in the cytoplasm. In terms of biological role, could be a nuclease involved in processing of the 5'-end of pre-16S rRNA. This Oleidesulfovibrio alaskensis (strain ATCC BAA-1058 / DSM 17464 / G20) (Desulfovibrio alaskensis) protein is Putative pre-16S rRNA nuclease.